The primary structure comprises 271 residues: Mannosyl-3-phosphoglycerate phosphatase (271 aa).

The active-site Nucleophile is Asp-13. Mg(2+)-binding residues include Asp-13, Asp-15, and Asp-214.

It belongs to the HAD-like hydrolase superfamily. MPGP family. Mg(2+) is required as a cofactor.

The protein resides in the cytoplasm. It catalyses the reaction 2-O-(alpha-D-mannosyl)-3-phosphoglycerate + H2O = (2R)-2-O-(alpha-D-mannosyl)-glycerate + phosphate. This Escherichia coli (strain 55989 / EAEC) protein is Mannosyl-3-phosphoglycerate phosphatase.